A 172-amino-acid polypeptide reads, in one-letter code: uncharacterized protein (172 aa).

Residues 147-159 (AGSGSGSGSGSGS) are compositionally biased toward gly residues. The interval 147–172 (AGSGSGSGSGSGSDTGPFKKSQYKIL) is disordered.

This is an uncharacterized protein from Homo sapiens (Human).